The sequence spans 106 residues: Ferredoxin (106 aa).

The [3Fe-4S] cluster site is built by Cys9 and Cys17. Positions 21, 40, 43, and 46 each coordinate [4Fe-4S] cluster. The 4Fe-4S ferredoxin-type domain maps to 31-60 (RMLYIHPDECVDCGACEPVCPVEAIYYEDD). Cys50 serves as a coordination point for [3Fe-4S] cluster. Residues 84–106 (GAAKVGKVDRDVEPVSSLPPQGE) form a disordered region.

The cofactor is [4Fe-4S] cluster. [3Fe-4S] cluster is required as a cofactor.

Functionally, ferredoxins are iron-sulfur proteins that transfer electrons in a wide variety of metabolic reactions. The protein is Ferredoxin (fdxA) of Saccharopolyspora erythraea (Streptomyces erythraeus).